A 716-amino-acid polypeptide reads, in one-letter code: Putative cuticle collagen 99 (716 aa).

2 disordered regions span residues 85-122 (LPSSDSNTDDDDVAKSRRVRNSCMCPAGPPGERGPVGP) and 183-472 (PPGP…SLVA). Triple-helical region regions lie at residues 179-238 (GMPG…KGDR), 265-298 (LPGPPGPPGPPGPAGRDGRHGLKGDRGLPGFDGE), and 302-330 (GPKGETGSPGRDGIPGARGPPGERGEKGD). Pro residues predominate over residues 266–277 (PGPPGPPGPPGP). A compositionally biased stretch (basic and acidic residues) spans 280-290 (RDGRHGLKGDR). The span at 349–358 (PGPPGPPGPP) shows a compositional bias: pro residues. 2 triple-helical region regions span residues 385–411 (GPPGEKGERGERGEPGDRGLPGAAGAA) and 422–467 (GPPG…GRHG). Over residues 389 to 401 (EKGERGERGEPGD) the composition is skewed to basic and acidic residues. Positions 402–422 (RGLPGAAGAANLLNGGKALVG) are enriched in low complexity. Basic and acidic residues predominate over residues 429–444 (RDGRPGDKGEKGEQGL). Asparagine 474 is a glycosylation site (N-linked (GlcNAc...) asparagine). A disordered region spans residues 503-716 (KNVIPGPPGP…GAETRPPVTD (214 aa)). Triple-helical region regions lie at residues 507–557 (PGPP…QPGA), 566–603 (GPRGPPGLPGPPGEKGDLGPPGLPGQPGSLGLPGPPGP), and 605–664 (GLRG…PGLD). Pro residues predominate over residues 568–577 (RGPPGLPGPP).

Belongs to the cuticular collagen family. In terms of assembly, collagen polypeptide chains are complexed within the cuticle by disulfide bonds and other types of covalent cross-links.

Its function is as follows. Nematode cuticles are composed largely of collagen-like proteins. The cuticle functions both as an exoskeleton and as a barrier to protect the worm from its environment. The polypeptide is Putative cuticle collagen 99 (col-99) (Caenorhabditis elegans).